The primary structure comprises 262 residues: Inner membrane protein YcfZ (262 aa).

The Cytoplasmic portion of the chain corresponds to 1-4; that stretch reads MKKF. Residues 5–27 traverse the membrane as a helical segment; sequence IILLSLLILLPLTAASKPLIPIM. Topologically, residues 28–182 are periplasmic; it reads KTLFTDVTGT…HENAPPGSTN (155 aa). The helical transmembrane segment at 183 to 202 threads the bilayer; that stretch reads TLGFIAWAATFILFSRIFYY. Residues 203-206 are Cytoplasmic-facing; it reads TTRF. The helical transmembrane segment at 207–229 threads the bilayer; that stretch reads IYALKFAVAMTIANMGYQALCLY. Topologically, residues 230 to 238 are periplasmic; that stretch reads IDNSFAITR. Residues 239–258 form a helical membrane-spanning segment; sequence ISPLWAGLIGVCTFIAALLL. Residues 259-262 are Cytoplasmic-facing; that stretch reads TSKR.

It localises to the cell inner membrane. In Escherichia coli (strain K12), this protein is Inner membrane protein YcfZ (ycfZ).